A 150-amino-acid chain; its full sequence is SsrA-binding protein (150 aa).

The protein belongs to the SmpB family.

The protein resides in the cytoplasm. Its function is as follows. Required for rescue of stalled ribosomes mediated by trans-translation. Binds to transfer-messenger RNA (tmRNA), required for stable association of tmRNA with ribosomes. tmRNA and SmpB together mimic tRNA shape, replacing the anticodon stem-loop with SmpB. tmRNA is encoded by the ssrA gene; the 2 termini fold to resemble tRNA(Ala) and it encodes a 'tag peptide', a short internal open reading frame. During trans-translation Ala-aminoacylated tmRNA acts like a tRNA, entering the A-site of stalled ribosomes, displacing the stalled mRNA. The ribosome then switches to translate the ORF on the tmRNA; the nascent peptide is terminated with the 'tag peptide' encoded by the tmRNA and targeted for degradation. The ribosome is freed to recommence translation, which seems to be the essential function of trans-translation. This Nitratiruptor sp. (strain SB155-2) protein is SsrA-binding protein.